Reading from the N-terminus, the 380-residue chain is O-methyltransferase ucdC (380 aa).

Residues 222–223, aspartate 247, and arginine 283 each bind S-adenosyl-L-methionine; that span reads GG. The Proton acceptor role is filled by histidine 287.

The protein belongs to the class I-like SAM-binding methyltransferase superfamily. Cation-independent O-methyltransferase family. COMT subfamily.

It participates in secondary metabolite biosynthesis. Nonribosomal peptide synthetase that mediates the biosynthesis of usterphenyllins and uscandidusins, p-terphenyl derivatives. Within the pathway, ucdC catalyzes O-methylation of the terphenyl triol intermediate produced by ucdB to yield terphenyllin carrying two methoxy moieties at C-9 and C-12. The pathway begin with the biosynthesis of 4-hydroxyphenylpyruvate (HPPA) from L-tyrosine, possibly by the aminotransferase ucdG. The nonribosomal peptide synthetase ucdA then condenses two HPPA units to produce atromentin. The key step in this pathway is the reduction and dehydration of atromentin to form a terphenyl triol intermediate, performed by the NAD-dependent dehydrogenase ucdB. Further O-methylation by the methyltransferase ucdC forms terphenyllin carrying two methoxy moieties at C-9 and C-12, and subsequent dihydroxylation at C-3 of ring A and C-15 of ring C by the flavin-dependent oxygenase ucdD leads to 3,15-dihydroxyterphenyllin. Prenylation by ucdE at position C-5 of ring A forms usterphenyllin B, and is followed by a second prenylation at position C-14 of ring C to form usterphenyllin A. The following furan ring formation that leads to uscandidusins A and B was proven to be an unexpected spontaneous non-enzymatic reaction. In Aspergillus ustus, this protein is O-methyltransferase ucdC.